Reading from the N-terminus, the 762-residue chain is Catalase-peroxidase (762 aa).

The segment at 1-22 (MAEAKCPFSQSRSNANVAGGGT) is disordered. The tryptophyl-tyrosyl-methioninium (Trp-Tyr) (with M-268) cross-link spans 96 to 242 (WHSAGTYRVF…LAASHMGLIY (147 aa)). His-97 (proton acceptor) is an active-site residue. The segment at residues 242 to 268 (YVNPEGPDGNPDPVAAARDIRTTFGRM) is a cross-link (tryptophyl-tyrosyl-methioninium (Tyr-Met) (with W-96)). Heme b is bound at residue His-283.

This sequence belongs to the peroxidase family. Peroxidase/catalase subfamily. As to quaternary structure, homodimer or homotetramer. Requires heme b as cofactor. Post-translationally, formation of the three residue Trp-Tyr-Met cross-link is important for the catalase, but not the peroxidase activity of the enzyme.

The protein localises to the cytoplasm. It carries out the reaction H2O2 + AH2 = A + 2 H2O. The catalysed reaction is 2 H2O2 = O2 + 2 H2O. Functionally, bifunctional enzyme with both catalase and broad-spectrum peroxidase activity. The sequence is that of Catalase-peroxidase from Aspergillus niger (strain ATCC MYA-4892 / CBS 513.88 / FGSC A1513).